Here is a 24-residue protein sequence, read N- to C-terminus: Cupiennin-5a (24 aa).

Expressed by the venom gland.

It is found in the secreted. The chain is Cupiennin-5a from Cupiennius salei (American wandering spider).